The following is a 159-amino-acid chain: Ribosomal RNA large subunit methyltransferase H (159 aa).

S-adenosyl-L-methionine-binding positions include Leu76, Gly108, and 127–132 (FGLLTL).

Belongs to the RNA methyltransferase RlmH family. In terms of assembly, homodimer.

The protein resides in the cytoplasm. It carries out the reaction pseudouridine(1915) in 23S rRNA + S-adenosyl-L-methionine = N(3)-methylpseudouridine(1915) in 23S rRNA + S-adenosyl-L-homocysteine + H(+). Its function is as follows. Specifically methylates the pseudouridine at position 1915 (m3Psi1915) in 23S rRNA. The sequence is that of Ribosomal RNA large subunit methyltransferase H from Leuconostoc mesenteroides subsp. mesenteroides (strain ATCC 8293 / DSM 20343 / BCRC 11652 / CCM 1803 / JCM 6124 / NCDO 523 / NBRC 100496 / NCIMB 8023 / NCTC 12954 / NRRL B-1118 / 37Y).